We begin with the raw amino-acid sequence, 213 residues long: N-(5'-phosphoribosyl)anthranilate isomerase (213 aa).

The protein belongs to the TrpF family.

It carries out the reaction N-(5-phospho-beta-D-ribosyl)anthranilate = 1-(2-carboxyphenylamino)-1-deoxy-D-ribulose 5-phosphate. The protein operates within amino-acid biosynthesis; L-tryptophan biosynthesis; L-tryptophan from chorismate: step 3/5. The chain is N-(5'-phosphoribosyl)anthranilate isomerase from Roseiflexus sp. (strain RS-1).